The primary structure comprises 104 residues: Large ribosomal subunit protein bL21 (104 aa).

The protein belongs to the bacterial ribosomal protein bL21 family. In terms of assembly, part of the 50S ribosomal subunit. Contacts protein L20.

Its function is as follows. This protein binds to 23S rRNA in the presence of protein L20. This is Large ribosomal subunit protein bL21 from Streptococcus agalactiae serotype Ia (strain ATCC 27591 / A909 / CDC SS700).